We begin with the raw amino-acid sequence, 470 residues long: MTLKLYDTMTRAKRDFVPSDPERVTMYVCGPTVYNYAHIGNFRPVVVFDLLFRVLRALYGEDHVLYAANVTDVDDKINRKAAEEGVPIGVVAERYLAAYNADARALGALAPTFQPKVTETMDAIVGMIGRLVDNGAAYAAEGHVLFSTEAFPDYGKLSGRPLEDLIAGARVDVAPYKKDPRDFVLWKPSKPGEPEWESPWGPGRPGWHIECSAMIEEALGLPIDIHGGGIDLVFPHHENELAQGVCAAHPHGHGQTYARYWLHNGFLNMAEEKMSKSVGNVALAHDLLKTWPGEALRWALLSGQYRQPLEWTDTLIEQAKSALDRLYRVLDDAARPGDAAAEPFVDPRVEAALHDDLNTPAAMAALFQISDELRSAIMRKDAAAVAEGRGRLVGSANLMGFLAQAPQAWFQSGADEDLKARVEDLLAQRQAARAAKDWPRADQIRAELAALNVEVMDGPSGATWRIKEQA.

A Zn(2+)-binding site is contributed by C29. Positions 31–41 match the 'HIGH' region motif; sequence PTVYNYAHIGN. Zn(2+) is bound by residues C211, H236, and E240. Positions 273-277 match the 'KMSKS' region motif; that stretch reads KMSKS. K276 is a binding site for ATP.

It belongs to the class-I aminoacyl-tRNA synthetase family. In terms of assembly, monomer. Zn(2+) serves as cofactor.

Its subcellular location is the cytoplasm. The catalysed reaction is tRNA(Cys) + L-cysteine + ATP = L-cysteinyl-tRNA(Cys) + AMP + diphosphate. In Phenylobacterium zucineum (strain HLK1), this protein is Cysteine--tRNA ligase.